The primary structure comprises 465 residues: UDP-N-acetylmuramate--L-alanine ligase (465 aa).

112–118 (GTHGKTT) lines the ATP pocket.

Belongs to the MurCDEF family.

It is found in the cytoplasm. The catalysed reaction is UDP-N-acetyl-alpha-D-muramate + L-alanine + ATP = UDP-N-acetyl-alpha-D-muramoyl-L-alanine + ADP + phosphate + H(+). It functions in the pathway cell wall biogenesis; peptidoglycan biosynthesis. In terms of biological role, cell wall formation. This is UDP-N-acetylmuramate--L-alanine ligase from Burkholderia thailandensis (strain ATCC 700388 / DSM 13276 / CCUG 48851 / CIP 106301 / E264).